The following is a 107-amino-acid chain: Small ribosomal subunit protein uS17 (107 aa).

Belongs to the universal ribosomal protein uS17 family. Part of the 30S ribosomal subunit.

One of the primary rRNA binding proteins, it binds specifically to the 5'-end of 16S ribosomal RNA. In Thermotoga maritima (strain ATCC 43589 / DSM 3109 / JCM 10099 / NBRC 100826 / MSB8), this protein is Small ribosomal subunit protein uS17.